A 664-amino-acid polypeptide reads, in one-letter code: Exoribonuclease 2 (664 aa).

One can recognise an RNB domain in the interval 193–521 (RIDMTHIPFV…INHRMLKALI (329 aa)). An S1 motif domain is found at 568 to 650 (QTLFTGEIFD…ENRSLVAKPT (83 aa)).

The protein belongs to the RNR ribonuclease family. RNase II subfamily.

Its subcellular location is the cytoplasm. It carries out the reaction Exonucleolytic cleavage in the 3'- to 5'-direction to yield nucleoside 5'-phosphates.. Involved in mRNA degradation. Hydrolyzes single-stranded polyribonucleotides processively in the 3' to 5' direction. The polypeptide is Exoribonuclease 2 (Vibrio vulnificus (strain YJ016)).